A 351-amino-acid chain; its full sequence is DNA polymerase IV (351 aa).

A UmuC domain is found at 4 to 185 (IIHVDMDCFF…LPLAKIPGVG (182 aa)). Mg(2+) is bound by residues Asp8 and Asp103. The active site involves Glu104.

This sequence belongs to the DNA polymerase type-Y family. As to quaternary structure, monomer. It depends on Mg(2+) as a cofactor.

It is found in the cytoplasm. It catalyses the reaction DNA(n) + a 2'-deoxyribonucleoside 5'-triphosphate = DNA(n+1) + diphosphate. Its function is as follows. Poorly processive, error-prone DNA polymerase involved in untargeted mutagenesis. Copies undamaged DNA at stalled replication forks, which arise in vivo from mismatched or misaligned primer ends. These misaligned primers can be extended by PolIV. Exhibits no 3'-5' exonuclease (proofreading) activity. May be involved in translesional synthesis, in conjunction with the beta clamp from PolIII. The polypeptide is DNA polymerase IV (Escherichia coli O157:H7).